We begin with the raw amino-acid sequence, 591 residues long: L-fucose isomerase (591 aa).

Catalysis depends on proton acceptor residues E337 and D361. Mn(2+) is bound by residues E337, D361, and H528.

The protein belongs to the L-fucose isomerase family. Homohexamer. The cofactor is Mn(2+).

The protein resides in the cytoplasm. It catalyses the reaction L-fucose = L-fuculose. The protein operates within carbohydrate degradation; L-fucose degradation; L-lactaldehyde and glycerone phosphate from L-fucose: step 1/3. Functionally, converts the aldose L-fucose into the corresponding ketose L-fuculose. This is L-fucose isomerase from Escherichia coli (strain 55989 / EAEC).